The sequence spans 243 residues: Trypsin (243 aa).

The first 15 residues, 1 to 15, serve as a signal peptide directing secretion; the sequence is MKFLLLCVLLGAAAA. Residues 16-20 constitute a propeptide, activation peptide; sequence FDDDK. A Peptidase S1 domain is found at 21-241; sequence IIGGATCAKS…YNAWIQNTIA (221 aa). 6 disulfides stabilise this stretch: Cys-27/Cys-157, Cys-45/Cys-61, Cys-129/Cys-230, Cys-136/Cys-203, Cys-168/Cys-182, and Cys-193/Cys-217. Catalysis depends on His-60, which acts as the Charge relay system. Residues Glu-72, Asn-74, and Glu-82 each coordinate Ca(2+). Residue Asp-104 is the Charge relay system of the active site. Ser-197 serves as the catalytic Charge relay system.

Belongs to the peptidase S1 family. The cofactor is Ca(2+).

The protein localises to the secreted. It localises to the extracellular space. It catalyses the reaction Preferential cleavage: Arg-|-Xaa, Lys-|-Xaa.. In Xenopus laevis (African clawed frog), this protein is Trypsin.